The chain runs to 277 residues: Small ribosomal subunit protein uS2 (277 aa).

Residues L247–N277 form a disordered region. The segment covering S253 to E264 has biased composition (acidic residues). The span at E265–N277 shows a compositional bias: basic and acidic residues.

It belongs to the universal ribosomal protein uS2 family.

In Chlamydia pneumoniae (Chlamydophila pneumoniae), this protein is Small ribosomal subunit protein uS2 (rpsB).